Here is a 284-residue protein sequence, read N- to C-terminus: tRNA pseudouridine synthase A (284 aa).

Aspartate 62 (nucleophile) is an active-site residue. Tyrosine 123 provides a ligand contact to substrate.

This sequence belongs to the tRNA pseudouridine synthase TruA family. Homodimer.

It catalyses the reaction uridine(38/39/40) in tRNA = pseudouridine(38/39/40) in tRNA. Formation of pseudouridine at positions 38, 39 and 40 in the anticodon stem and loop of transfer RNAs. The chain is tRNA pseudouridine synthase A from Streptomyces griseus subsp. griseus (strain JCM 4626 / CBS 651.72 / NBRC 13350 / KCC S-0626 / ISP 5235).